Consider the following 403-residue polypeptide: Imidazolonepropionase (403 aa).

His69 and His71 together coordinate Fe(3+). Positions 69 and 71 each coordinate Zn(2+). 3 residues coordinate 4-imidazolone-5-propanoate: Arg78, Tyr141, and His174. Tyr141 is an N-formimidoyl-L-glutamate binding site. A Fe(3+)-binding site is contributed by His239. Residue His239 participates in Zn(2+) binding. Gln242 is a binding site for 4-imidazolone-5-propanoate. Asp314 lines the Fe(3+) pocket. Asp314 lines the Zn(2+) pocket. N-formimidoyl-L-glutamate-binding residues include Asn316 and Gly318. Ser319 provides a ligand contact to 4-imidazolone-5-propanoate.

This sequence belongs to the metallo-dependent hydrolases superfamily. HutI family. Requires Zn(2+) as cofactor. It depends on Fe(3+) as a cofactor.

The protein resides in the cytoplasm. It catalyses the reaction 4-imidazolone-5-propanoate + H2O = N-formimidoyl-L-glutamate. The protein operates within amino-acid degradation; L-histidine degradation into L-glutamate; N-formimidoyl-L-glutamate from L-histidine: step 3/3. Functionally, catalyzes the hydrolytic cleavage of the carbon-nitrogen bond in imidazolone-5-propanoate to yield N-formimidoyl-L-glutamate. It is the third step in the universal histidine degradation pathway. The sequence is that of Imidazolonepropionase from Legionella pneumophila (strain Corby).